The primary structure comprises 268 residues: Protein MGF 300-1L (268 aa).

Residues 1–175 (MVSLTTYCLK…QTFKTFYAKN (175 aa)) are Cytoplasmic-facing. The chain crosses the membrane as a helical span at residues 176–193 (YSLSTLYCIFLAIYYKLY). Topologically, residues 194–268 (MALRKMVKIY…MYAFSQNNFW (75 aa)) are extracellular.

This sequence belongs to the asfivirus MGF 300 family.

It localises to the host membrane. Plays a role in virus cell tropism, and may be required for efficient virus replication in macrophages. The sequence is that of Protein MGF 300-1L from African swine fever virus (isolate Tick/Malawi/Lil 20-1/1983) (ASFV).